Here is a 517-residue protein sequence, read N- to C-terminus: Phospholipase C C (517 aa).

The tat-type signal signal peptide spans 1–39 (MVSQGAFAGMSRRAFLAKAAGAGAAAVLTDWAAPVIEKA).

This sequence belongs to the bacterial phospholipase C family. Post-translationally, predicted to be exported by the Tat system. The position of the signal peptide cleavage has not been experimentally proven.

The protein localises to the secreted. The protein resides in the cell wall. The enzyme catalyses a 1,2-diacyl-sn-glycero-3-phosphocholine + H2O = phosphocholine + a 1,2-diacyl-sn-glycerol + H(+). It catalyses the reaction 1,2-dihexadecanoyl-sn-glycero-3-phosphocholine + H2O = 1,2-dihexadecanoyl-sn-glycerol + phosphocholine + H(+). Involved in virulence. Induces cytotoxic effects on mouse macrophage cell lines, via direct or indirect enzymatic hydrolysis of cell membrane phospholipids. Hydrolyzes phosphatidylcholine. Does not have hemolytic activity. This Mycobacterium tuberculosis (strain ATCC 25618 / H37Rv) protein is Phospholipase C C.